Reading from the N-terminus, the 405-residue chain is CMP-sialic acid transporter 5 (405 aa).

Residues 1–43 (MQRNGVVECSVCRSRLVVPSPRSVSRAYDKHRSKISSKFRALN) are Cytoplasmic-facing. A helical membrane pass occupies residues 44-64 (VLLVVGDCILVGLQPILVFMS). Residues 65-74 (KVDGKFQFSP) lie on the Lumenal side of the membrane. Residues 75 to 95 (ISVNFLTEVTKVVFAIVMLII) traverse the membrane as a helical segment. Residues 96–121 (QSRKQKVGEKPLLARSTFIQAARNNA) are Cytoplasmic-facing. A helical transmembrane segment spans residues 122 to 142 (LLAVPALLYAINNYLKFIMQL). At 143–147 (YFNPS) the chain is on the lumenal side. Residues 148-168 (TVKMLSNLKVLVIAVLLKFIM) traverse the membrane as a helical segment. The Cytoplasmic segment spans residues 169–171 (KRR). The chain crosses the membrane as a helical span at residues 172 to 192 (FSVIQWEALALLLIGISINQL). Topologically, residues 193-200 (RTVPAGNT) are lumenal. Residues 201–221 (AFGLPVTAIAYIYTLIFVTVP) form a helical membrane-spanning segment. Topologically, residues 222–244 (SLASVYNEYALKSQYDTSIYLQN) are cytoplasmic. Residues 245-265 (LFLYGYGAIFNFLGILGTALF) form a helical membrane-spanning segment. Over 266–281 (QGPESFNILRGHSRAT) the chain is Lumenal. Residues 282–302 (MFLICNNAAQGILSSFFFKYA) traverse the membrane as a helical segment. The Cytoplasmic portion of the chain corresponds to 303–322 (DTILKKYSSTVATIFTGLAS). Residues 323 to 343 (AAFLGHTLTINFLLGISVVFI) traverse the membrane as a helical segment. At 344–405 (SMHQFFSPLA…TDERQPLLPT (62 aa)) the chain is on the lumenal side. The segment at 368 to 405 (DTQNHRSSESSFVNMTAGAAEDASHRIGTDERQPLLPT) is disordered. Residues 389-405 (DASHRIGTDERQPLLPT) show a composition bias toward basic and acidic residues.

It belongs to the nucleotide-sugar transporter family. CMP-Sialate:CMP antiporter (TC 2.A.7.12) subfamily.

It localises to the golgi apparatus membrane. Functionally, sugar transporter involved in the transport of CMP-sialic acid from the cytoplasm into the Golgi. May transport important nucleotide sugars such as CMP-Kdo (2-keto-3-deoxy-D-manno-octulosonic acid) in physiological conditions. This Oryza sativa subsp. japonica (Rice) protein is CMP-sialic acid transporter 5.